The primary structure comprises 486 residues: 3-dehydroshikimate dehydratase (486 aa).

The catalysed reaction is 3-dehydroshikimate = 3,4-dihydroxybenzoate + H2O. It functions in the pathway aromatic compound metabolism; 3,4-dihydroxybenzoate biosynthesis; 3,4-dihydroxybenzoate from 3-dehydroquinate: step 2/2. Converts dehydroshikimate to protocatechuate. This Acinetobacter baylyi (strain ATCC 33305 / BD413 / ADP1) protein is 3-dehydroshikimate dehydratase (quiC).